The sequence spans 255 residues: MKRLNKLVLYISFLILVISFTAGCGIGKEAEVKKSFEKTLSMYPIKNLEDLYDKEGYRDDEFDKNDKGTWIIGSEMVVQPKGERMKSKGMVLYMNRNTKTTTGKYIVSETLHDEDGRPKSKDKEYPVKMVDNKIIPTKGIKDENIKKEIENFKFFAQYGSFKDLSKYKDGDISYNPEVPSYSAKYQLTNDDYNVKQLRKRYKIPTNKAPKLLLKGSGDLKGSSVGYKDIEFTFVEKKGENTFFTDSLHLEPSEDK.

The first 23 residues, 1 to 23 (MKRLNKLVLYISFLILVISFTAG), serve as a signal peptide directing secretion. Cysteine 24 is lipidated: N-palmitoyl cysteine. Cysteine 24 carries the S-diacylglycerol cysteine lipid modification.

Belongs to the staphylococcal tandem lipoprotein family.

Its subcellular location is the cell membrane. This is an uncharacterized protein from Staphylococcus aureus (strain NCTC 8325 / PS 47).